A 274-amino-acid polypeptide reads, in one-letter code: Diaminopimelate epimerase (274 aa).

Positions 11, 44, and 64 each coordinate substrate. Cys-73 acts as the Proton donor in catalysis. Substrate contacts are provided by residues 74-75 (GN), Asn-157, Asn-190, and 208-209 (ER). Catalysis depends on Cys-217, which acts as the Proton acceptor. 218-219 (GS) contacts substrate.

The protein belongs to the diaminopimelate epimerase family. Homodimer.

The protein resides in the cytoplasm. The enzyme catalyses (2S,6S)-2,6-diaminopimelate = meso-2,6-diaminopimelate. It functions in the pathway amino-acid biosynthesis; L-lysine biosynthesis via DAP pathway; DL-2,6-diaminopimelate from LL-2,6-diaminopimelate: step 1/1. Its function is as follows. Catalyzes the stereoinversion of LL-2,6-diaminopimelate (L,L-DAP) to meso-diaminopimelate (meso-DAP), a precursor of L-lysine and an essential component of the bacterial peptidoglycan. In Pasteurella multocida (strain Pm70), this protein is Diaminopimelate epimerase.